We begin with the raw amino-acid sequence, 1649 residues long: MALFRRFFYKKPPDRLLEISERVYVFDCCFSSDVMGEDEYKVYLGGIVAQLQDHFPEASFMVFNFREGEQRSQISDVLSQYDMTVMDYPRQYESCPLLPLEMIHHFLRSSESWLSLEGQQNVLLMHCERGGWPVLAFMLSGLLLYRKQYHGEQKTLEMVHKQAPKELLHLLSPLNPQPSQLRYLQYISRRNLGSDWPPSDTPLLLDCLILRDLPHFEGKKGCRPILRVYGQDPKARTNRSSILLFSTLKTKKHTRLYQQEECILVKLDIQCRVQGDVVLECIHLHDDLVSEEMVFRIMFHTAFVRANILMLQRDEMDILWDVKDQFPKEFKAEVLFSGADAVVPPITTSTLSDDENDFDMTSPEEFFEVEEIFSDVIDGPDHKRDSDSFVVVDTASDDSEGKEVWKGDVEPNAFLDCASDDSNHKHDMHAETSTDPVKDITVDDVQYRSDGKADSNIDSVKDIGIDDGDEQRKRRTVEAKENDSSTVQTQSKGDEESNDLESMSQKTNTSLNKPISEKPQATLRKQVGANAKPAAAGDSLKPKSKQQETQGPNVRMAKPNAVSRWIPSNKGSYKDSMHVAYPPTRINSAPASITTSLKDGKRATSPDGVIPKDAKTKYLRASVSSPDMRSRAPICSSPDSSPKETPSSLPPASPHQAPPPLPSLTSEAKTVLHSSQAVASPPPPPPPPPLPTYSHYQTSQLPPPPPPPPPFSSERPNSGTVLPPPPPPPPPFSSERPNSGTVLPPPPPPPLPFSSERPNSGTVLPPPPSPPWKSVYASALAIPAICSTSQAPTSSPTPPPPPPAYYSVGQKSSDLQTSQLPSPPPPPPPPPFASVRRNSETLLPPPPPPPPPPFASVRRNSETLLPPPPPPPPWKSLYASTFETHEACSTSSSPPPPPPPPPFSPLNTTKANDYILPPPPLPYTSIAPSPSVKILPLHGISSAPSPPVKTAPPPPPPPPFSNAHSVLSPPPPSYGSPPPPPPPPPSYGSPPPPPPPPPSYGSPPPPPPPPPGYGSPPPPPPPPPSYGSPPPPPPPPFSHVSSIPPPPPPPPMHGGAPPPPPPPPMHGGAPPPPPPPPMHGGAPPPPPPPPMHGGAPPPPPPPMFGGAQPPPPPPMRGGAPPPPPPPMRGGAPPPPPPPMRGGAPPPPPPPMHGGAPPPPPPPMRGGAPPPPPPPGGRGPGAPPPPPPPGGRAPGPPPPPGPRPPGGGPPPPPMLGARGAAVDPRGAGRGRGLPRPGFGSAAQKKSSLKPLHWVKVTRALQGSLWDELQRHGESQTPSEFDVSEIETLFSATVQKPADKSGSRRKSVGAKPEKVQLIDLRRANNTEIMLTKVKMPLPDMMAAVLAMDESVLDVDQIENLIKFCPTKEEMELLKNYTGDKTTLGKCEQYFLELMKVPRVEAKLRVFSFKFQFGTQITEFKKSLNAVNSACEEVRSSQKLKEIMKKILYLGNTLNQGTARGAAVGFKLDSLSKLSDTRAANSKMTLMHYLCKVLASKASVLLDFPKDLESLESASKIQLKSLAEEMQAIIKGLEKLNQELTASESDGPVSDVFRKTLGDFISVAETEVATVSSLYSVVGRNADALAHYFGEDPNRCPFEQVTATLLNFIRLFKKAHEENVKQAELEKKKALKEAEMEKAKGVNLTKKPVDDS.

Residues 1 to 194 (MALFRRFFYK…QYISRRNLGS (194 aa)) enclose the Phosphatase tensin-type domain. The active-site Phosphocysteine intermediate is Cys127. The region spanning 200 to 339 (DTPLLLDCLI…FKAEVLFSGA (140 aa)) is the C2 tensin-type domain. Disordered stretches follow at residues 416-774 (DCAS…PWKS) and 787-1245 (STSQ…QKKS). Residues 421–483 (DSNHKHDMHA…RRTVEAKEND (63 aa)) show a composition bias toward basic and acidic residues. Polar residues-rich tracts occupy residues 500–513 (LESM…SLNK) and 585–597 (RINS…TTSL). A compositionally biased stretch (basic and acidic residues) spans 598-616 (KDGKRATSPDGVIPKDAKT). Over residues 648 to 662 (SLPPASPHQAPPPLP) the composition is skewed to pro residues. The segment covering 665-678 (TSEAKTVLHSSQAV) has biased composition (polar residues). 5 stretches are compositionally biased toward pro residues: residues 680–691 (SPPPPPPPPPLP), 701–711 (LPPPPPPPPPF), 722–732 (LPPPPPPPPPF), 743–752 (LPPPPPPPLP), and 795–804 (SPTPPPPPPA). Polar residues predominate over residues 809-820 (GQKSSDLQTSQL). Pro residues-rich tracts occupy residues 821–832 (PSPPPPPPPPPF), 843–854 (LPPPPPPPPPPF), and 865–874 (LPPPPPPPPW). The segment covering 878 to 890 (YASTFETHEACST) has biased composition (polar residues). Pro residues-rich tracts occupy residues 893–904 (SPPPPPPPPPFS), 944–960 (PSPP…PPPF), and 968–1213 (SPPP…PPPM). Residues 1237-1635 (FGSAAQKKSS…KALKEAEMEK (399 aa)) form the FH2 domain.

It belongs to the formin-like family. Class-II subfamily.

The sequence is that of Formin-like protein 20 (FH20) from Arabidopsis thaliana (Mouse-ear cress).